The following is a 410-amino-acid chain: Arginine deiminase (410 aa).

Residue Cys-400 is the Amidino-cysteine intermediate of the active site.

The protein belongs to the arginine deiminase family.

Its subcellular location is the cytoplasm. It catalyses the reaction L-arginine + H2O = L-citrulline + NH4(+). Its pathway is amino-acid degradation; L-arginine degradation via ADI pathway; carbamoyl phosphate from L-arginine: step 1/2. This chain is Arginine deiminase, found in Levilactobacillus brevis (strain ATCC 367 / BCRC 12310 / CIP 105137 / JCM 1170 / LMG 11437 / NCIMB 947 / NCTC 947) (Lactobacillus brevis).